The sequence spans 269 residues: MSRKPSGLGRGLEALLPKTGAGVVRLPLASIRPNPRQPRKRFAEESLKELADSIREKGLLQPLLVRPQGDGYELVAGERRYRAALMAGLQEVPAVVKDLTDREALELALVENLQREDLSPVEEARGYQALLEMGLTQEEVARRVGKARSTVANALRLLQLPPEALEALERGEITAGHARALLMLEPEDRLWGLKEILEKGLSVRQAEALRERLAMAPKRSAEPSPLSLELSRHLGLPVRVVGGKKGKVVIQYRSLEELEALLRRLGYQA.

Residues 1–20 are stimulates ATPase activity of Soj by 8%; the sequence is MSRKPSGLGRGLEALLPKTG. The segment at residues 137 to 156 is a DNA-binding region (H-T-H motif); that stretch reads QEEVARRVGKARSTVANALR. The tract at residues 223-269 is required for DNA-binding; may be responsible for dimerization; sequence PSPLSLELSRHLGLPVRVVGGKKGKVVIQYRSLEELEALLRRLGYQA.

The protein belongs to the ParB family. Homodimer, probably via the C-terminal 46 residues. Dimerization of the N-terminal H-T-H region may require DNA-binding. Probably interacts with ATPase Soj.

Probably involved in chromosome partitioning. Binds to a plasmid centromere-like site parS. Stimulates the ATPase activity 10-fold of Soj; the first 20 residues may be responsible. This Thermus thermophilus (strain ATCC BAA-163 / DSM 7039 / HB27) protein is Chromosome-partitioning protein Spo0J (spo0C).